The sequence spans 384 residues: Methylthioribose-1-phosphate isomerase (384 aa).

Residue D255 is the Proton donor of the active site.

Belongs to the eIF-2B alpha/beta/delta subunits family. MtnA subfamily.

It is found in the cytoplasm. The protein localises to the nucleus. The enzyme catalyses 5-(methylsulfanyl)-alpha-D-ribose 1-phosphate = 5-(methylsulfanyl)-D-ribulose 1-phosphate. Its pathway is amino-acid biosynthesis; L-methionine biosynthesis via salvage pathway; L-methionine from S-methyl-5-thio-alpha-D-ribose 1-phosphate: step 1/6. Its function is as follows. Catalyzes the interconversion of methylthioribose-1-phosphate (MTR-1-P) into methylthioribulose-1-phosphate (MTRu-1-P). The sequence is that of Methylthioribose-1-phosphate isomerase (mri1) from Talaromyces marneffei (strain ATCC 18224 / CBS 334.59 / QM 7333) (Penicillium marneffei).